The following is a 230-amino-acid chain: 3,4-dihydroxy-2-butanone 4-phosphate synthase (230 aa).

D-ribulose 5-phosphate is bound by residues 42-43 (RE), Asp-47, 155-159 (RRGHT), and Glu-179. Residue Glu-43 participates in Mg(2+) binding. His-158 serves as a coordination point for Mg(2+).

It belongs to the DHBP synthase family. Homodimer. Mg(2+) is required as a cofactor. It depends on Mn(2+) as a cofactor.

The enzyme catalyses D-ribulose 5-phosphate = (2S)-2-hydroxy-3-oxobutyl phosphate + formate + H(+). Its pathway is cofactor biosynthesis; riboflavin biosynthesis; 2-hydroxy-3-oxobutyl phosphate from D-ribulose 5-phosphate: step 1/1. In terms of biological role, catalyzes the conversion of D-ribulose 5-phosphate to formate and 3,4-dihydroxy-2-butanone 4-phosphate. The protein is 3,4-dihydroxy-2-butanone 4-phosphate synthase of Bordetella pertussis (strain Tohama I / ATCC BAA-589 / NCTC 13251).